The sequence spans 751 residues: 1,3-beta-galactosyl-N-acetylhexosamine phosphorylase (751 aa).

Residue Asp313 is the Proton donor of the active site.

The protein belongs to the glycoside hydrolase 112 family. Homodimer.

The catalysed reaction is beta-D-galactosyl-(1-&gt;3)-N-acetyl-D-glucosamine + phosphate = alpha-D-galactose 1-phosphate + N-acetyl-D-glucosamine. In terms of biological role, reversibly phosphorolyzes lacto-N-biose to Gal1-P and N-acetylglucosamine (GlcNAc) and galacto-N-biose to Gal1-P and N-acetylgalactosamine (GalNAc). Involved in the lacto-N-biose I/galacto-N-biose (LNB/GNB) degradation pathway, which is important for host intestinal colonization by bifidobacteria. The protein is 1,3-beta-galactosyl-N-acetylhexosamine phosphorylase (lnpA) of Bifidobacterium longum subsp. longum (strain ATCC 15707 / DSM 20219 / JCM 1217 / NCTC 11818 / E194b).